Here is a 378-residue protein sequence, read N- to C-terminus: Uroporphyrinogen decarboxylase (378 aa).

Substrate-binding positions include 40 to 44 (RQAGR), D90, Y167, S222, and H355.

The protein belongs to the uroporphyrinogen decarboxylase family. As to quaternary structure, homodimer.

Its subcellular location is the cytoplasm. It catalyses the reaction uroporphyrinogen III + 4 H(+) = coproporphyrinogen III + 4 CO2. The protein operates within porphyrin-containing compound metabolism; protoporphyrin-IX biosynthesis; coproporphyrinogen-III from 5-aminolevulinate: step 4/4. Functionally, catalyzes the decarboxylation of four acetate groups of uroporphyrinogen-III to yield coproporphyrinogen-III. In Psychrobacter cryohalolentis (strain ATCC BAA-1226 / DSM 17306 / VKM B-2378 / K5), this protein is Uroporphyrinogen decarboxylase.